A 204-amino-acid chain; its full sequence is Lymphotoxin-alpha (204 aa).

Residues 1–33 (MTPPGRLYLLRVRSAPVLLLLGLLLGLPPGAQG) form the signal peptide. In terms of domain architecture, THD spans 62 to 204 (PAAHLIGDPS…SSVFFGAFAL (143 aa)). Asparagine 95 carries N-linked (GlcNAc...) asparagine glycosylation. Cysteine 119 and cysteine 155 form a disulfide bridge.

This sequence belongs to the tumor necrosis factor family. Homotrimer, and heterotrimer of either two LTB and one LTA subunits or (less prevalent) two LTA and one LTB subunits. Interacts with TNFRSF14.

The protein localises to the secreted. It is found in the membrane. In terms of biological role, cytokine that in its homotrimeric form binds to TNFRSF1A/TNFR1, TNFRSF1B/TNFBR and TNFRSF14/HVEM. In its heterotrimeric form with LTB binds to TNFRSF3/LTBR. Lymphotoxin is produced by lymphocytes and is cytotoxic for a wide range of tumor cells in vitro and in vivo. The polypeptide is Lymphotoxin-alpha (LTA) (Canis lupus familiaris (Dog)).